Consider the following 596-residue polypeptide: Mitoguardin 2 (596 aa).

Transmembrane regions (helical) follow at residues 11-31 (IMQA…STFG) and 40-60 (LSPS…ALAL). Disordered regions lie at residues 67–158 (RRGR…AAWE) and 576–596 (ALPK…GQQD). Polar residues predominate over residues 110–123 (MSPSTRSNDTLSGV). The segment covering 124–140 (SSIAQSKHSSSSHSIAS) has biased composition (low complexity). 2 stretches are compositionally biased toward polar residues: residues 143–152 (VPSSPNQSVN) and 583–596 (QAES…GQQD).

This sequence belongs to the mitoguardin family. As to quaternary structure, homodimer and heterodimer; forms heterodimers with miga1.

It localises to the mitochondrion outer membrane. In terms of biological role, regulator of mitochondrial fusion: acts by forming homo- and heterodimers at the mitochondrial outer membrane and facilitating the formation of pld6/MitoPLD dimers. May act by regulating phospholipid metabolism via pld6/MitoPLD. This is Mitoguardin 2 from Danio rerio (Zebrafish).